The following is a 462-amino-acid chain: Tubby-like F-box protein 7 (462 aa).

The region spanning 54–109 (SKWAGLPPELLRDVMKRLEEDDSNWPSRKDVVACASVCTTWRDMCKDIVRNPEFCG) is the F-box domain. Disordered stretches follow at residues 317–338 (FSEF…DDVN) and 383–418 (QPSS…SSSN). A compositionally biased stretch (low complexity) spans 383-417 (QPSSGAASEPSQAGQAAQQQTQPSQPSSSSSSSSS).

Belongs to the TUB family. As to expression, ubiquitous.

The sequence is that of Tubby-like F-box protein 7 (TULP7) from Oryza sativa subsp. japonica (Rice).